The primary structure comprises 91 residues: Cell division topological specificity factor (91 aa).

Belongs to the MinE family.

Functionally, prevents the cell division inhibition by proteins MinC and MinD at internal division sites while permitting inhibition at polar sites. This ensures cell division at the proper site by restricting the formation of a division septum at the midpoint of the long axis of the cell. This chain is Cell division topological specificity factor, found in Erwinia tasmaniensis (strain DSM 17950 / CFBP 7177 / CIP 109463 / NCPPB 4357 / Et1/99).